A 252-amino-acid polypeptide reads, in one-letter code: Probable phosphatase Shewmr4_2619 (252 aa).

Zn(2+) contacts are provided by H8, H10, H16, H41, E74, H102, H132, D193, and H195.

The protein belongs to the PHP family. It depends on Zn(2+) as a cofactor.

The polypeptide is Probable phosphatase Shewmr4_2619 (Shewanella sp. (strain MR-4)).